The primary structure comprises 284 residues: Extracellular metalloprotease VDBG_01143 (284 aa).

The N-terminal stretch at 1 to 18 is a signal peptide; the sequence is MLFKSLFVAAATAVGVSG. Asn58 carries an N-linked (GlcNAc...) asparagine glycan. Residue His200 participates in Zn(2+) binding. Glu201 is an active-site residue. His204 contacts Zn(2+). The cysteines at positions 236 and 263 are disulfide-linked.

Belongs to the peptidase M43B family.

The protein localises to the secreted. Its function is as follows. Secreted metalloproteinase that allows assimilation of proteinaceous substrates. This chain is Extracellular metalloprotease VDBG_01143, found in Verticillium alfalfae (strain VaMs.102 / ATCC MYA-4576 / FGSC 10136) (Verticillium wilt of alfalfa).